Here is a 244-residue protein sequence, read N- to C-terminus: Aspartate/glutamate leucyltransferase (244 aa).

This sequence belongs to the R-transferase family. Bpt subfamily.

It localises to the cytoplasm. It catalyses the reaction N-terminal L-glutamyl-[protein] + L-leucyl-tRNA(Leu) = N-terminal L-leucyl-L-glutamyl-[protein] + tRNA(Leu) + H(+). It carries out the reaction N-terminal L-aspartyl-[protein] + L-leucyl-tRNA(Leu) = N-terminal L-leucyl-L-aspartyl-[protein] + tRNA(Leu) + H(+). Its function is as follows. Functions in the N-end rule pathway of protein degradation where it conjugates Leu from its aminoacyl-tRNA to the N-termini of proteins containing an N-terminal aspartate or glutamate. The polypeptide is Aspartate/glutamate leucyltransferase (Bordetella parapertussis (strain 12822 / ATCC BAA-587 / NCTC 13253)).